A 529-amino-acid polypeptide reads, in one-letter code: Peptide chain release factor 3 (529 aa).

The tr-type G domain occupies 11 to 280 (AKRRTFAIIS…GLVEWAPAPM (270 aa)). Residues 20–27 (SHPDAGKT), 88–92 (DTPGH), and 142–145 (NKLD) each bind GTP.

It belongs to the TRAFAC class translation factor GTPase superfamily. Classic translation factor GTPase family. PrfC subfamily.

The protein resides in the cytoplasm. Its function is as follows. Increases the formation of ribosomal termination complexes and stimulates activities of RF-1 and RF-2. It binds guanine nucleotides and has strong preference for UGA stop codons. It may interact directly with the ribosome. The stimulation of RF-1 and RF-2 is significantly reduced by GTP and GDP, but not by GMP. This Escherichia coli O8 (strain IAI1) protein is Peptide chain release factor 3.